The sequence spans 493 residues: EGF-containing fibulin-like extracellular matrix protein 1 (493 aa).

Positions 1–17 are cleaved as a signal peptide; the sequence is MLQTLFLTMLTLALVKS. Residues 26 to 71 enclose the EGF-like 1; atypical domain; the sequence is YTQCTDGYEWDPIRQQCKDIDECDIVPDACKGGMKCVNHYGGYLCL. Residues 173–213 form the EGF-like 2; calcium-binding domain; that stretch reads DIDECTSGTHNCRTDQVCINLRGSFTCQCLPGYQKRGEQCV. Intrachain disulfides connect C177–C190, C184–C199, C201–C212, C218–C228, C224–C237, C239–C252, C258–C268, C264–C277, C279–C292, C298–C309, C305–C318, C320–C332, C338–C350, C344–C359, and C365–C377. The region spanning 214 to 253 is the EGF-like 3; calcium-binding domain; the sequence is DIDECTVPPYCHQRCVNTPGSFYCQCSPGFQLAANNYTCV. A glycan (N-linked (GlcNAc...) asparagine) is linked at N249. The EGF-like 4; calcium-binding domain maps to 254–293; sequence DINECDASNQCAQQCYNILGSFICQCNQGYELSSDRLNCE. A mediates interaction with TIMP3 region spans residues 259–493; it reads DASNQCAQQC…LTIIVGPFSF (235 aa). The region spanning 294-333 is the EGF-like 5; calcium-binding domain; it reads DIDECRTSSYLCQYQCVNEPGKFSCMCPQGYEVVRSRTCQ. In terms of domain architecture, EGF-like 6; calcium-binding spans 334–378; that stretch reads DINECETTNECREDEMCWNYHGGFRCYPRNPCQDHYVLTSENRCV.

Belongs to the fibulin family. Interacts with ECM1. Interacts with TIMP3. Expressed in the eye in the ciliary body, cornea, inner nuclear layer of the retina, and in the optic disk.

Its subcellular location is the secreted. The protein localises to the extracellular space. It localises to the extracellular matrix. Binds EGFR, the EGF receptor, inducing EGFR autophosphorylation and the activation of downstream signaling pathways. May play a role in cell adhesion and migration. May function as a negative regulator of chondrocyte differentiation. In the olfactory epithelium, it may regulate glial cell migration, differentiation and the ability of glial cells to support neuronal neurite outgrowth. This Mus musculus (Mouse) protein is EGF-containing fibulin-like extracellular matrix protein 1 (Efemp1).